Here is a 118-residue protein sequence, read N- to C-terminus: Small ribosomal subunit protein uS13 (118 aa).

The tract at residues asparagine 94–arginine 118 is disordered. Positions alanine 106 to arginine 118 are enriched in basic residues.

Belongs to the universal ribosomal protein uS13 family. In terms of assembly, part of the 30S ribosomal subunit. Forms a loose heterodimer with protein S19. Forms two bridges to the 50S subunit in the 70S ribosome.

Located at the top of the head of the 30S subunit, it contacts several helices of the 16S rRNA. In the 70S ribosome it contacts the 23S rRNA (bridge B1a) and protein L5 of the 50S subunit (bridge B1b), connecting the 2 subunits; these bridges are implicated in subunit movement. Contacts the tRNAs in the A and P-sites. This is Small ribosomal subunit protein uS13 from Psychrobacter sp. (strain PRwf-1).